A 593-amino-acid chain; its full sequence is Arginine--tRNA ligase (593 aa).

Positions 138–148 (ANPTGPLHVGH) match the 'HIGH' region motif.

It belongs to the class-I aminoacyl-tRNA synthetase family. As to quaternary structure, monomer.

The protein resides in the cytoplasm. It catalyses the reaction tRNA(Arg) + L-arginine + ATP = L-arginyl-tRNA(Arg) + AMP + diphosphate. The chain is Arginine--tRNA ligase from Burkholderia ambifaria (strain ATCC BAA-244 / DSM 16087 / CCUG 44356 / LMG 19182 / AMMD) (Burkholderia cepacia (strain AMMD)).